The chain runs to 447 residues: Multicopper oxidase mco (447 aa).

The segment covering 1–25 (MMNMKEDKKNTMDMKNMKHHDERKK) has biased composition (basic and acidic residues). The disordered stretch occupies residues 1–28 (MMNMKEDKKNTMDMKNMKHHDERKKLNS). Positions 107, 109, 147, 149, 375, 378, 380, 428, 429, 430, 434, and 439 each coordinate Cu cation.

It belongs to the multicopper oxidase family. Requires Cu cation as cofactor.

It localises to the cytoplasm. Its function is as follows. May be involved in copper homeostasis and oxidative stress response. This Staphylococcus epidermidis (strain ATCC 12228 / FDA PCI 1200) protein is Multicopper oxidase mco (mco).